Reading from the N-terminus, the 299-residue chain is Zinc finger protein-like 1 homolog (299 aa).

The B box-type; degenerate zinc-finger motif lies at 1-43 (MGLCKCPKRLVTNQFCFEHRVNVCEHCMVQSHPKCIVQSYLQW). The RING-type; atypical zinc finger occupies 53-101 (CTLCGTTLEQGDCVRLVCYHVFHWDCLNARQAALPANTAPRGHQCPACS). The tract at residues 200–231 (AGDYASSRRPLLPRQSPIGGTDRDDNKYQRRT) is disordered. Serine 215 is subject to Phosphoserine. Residues 256–276 (WFLVTAGILAFVLFVYLMAWL) form a helical membrane-spanning segment.

The protein belongs to the ZFPL1 family.

Its subcellular location is the membrane. The sequence is that of Zinc finger protein-like 1 homolog from Drosophila melanogaster (Fruit fly).